Reading from the N-terminus, the 2348-residue chain is Transcription factor HIVEP3 (2348 aa).

A disordered region spans residues 1–105 (MDPDQSIKGT…AFMSPGKPEH (105 aa)). Positions 27-72 (IQTSVSSSAPYPGSGTTAPSESATQELLATQPFSGPSQEKTGQQQK) are enriched in polar residues. 2 C2H2-type zinc fingers span residues 185-207 (YICQ…IRSH) and 213-235 (YPCG…RKSH). The tract at residues 185 to 235 (YICQYCSRPCAKPSVLQKHIRSHTGERPYPCGPCGFSFKTKSNLYKHRKSH) is ZAS1. Positions 204–1055 (IRSHTGERPY…KGKQESSEEP (852 aa)) are no DNA binding activity or transactivation activity, but complete prevention of TRAF-dependent NF-Kappa-B activation; associates with TRAF2 and JUN. 3 disordered regions span residues 239–401 (IKAG…SPPN), 475–532 (DSVK…PLLR), and 561–628 (ADPE…TKKG). The interval 257 to 280 (EMERIPGEEFEEPTEGESTDSEEE) is acidic 1. Residues 264 to 281 (EEFEEPTEGESTDSEEET) show a composition bias toward acidic residues. Positions 298–323 (PLLSSSLYSSGSHGSSQERCSLSQSS) are enriched in low complexity. A compositionally biased stretch (basic and acidic residues) spans 338-352 (SSEHPLSHKPEDTHT). Composition is skewed to polar residues over residues 372 to 401 (TFLS…SPPN) and 485 to 495 (TRRSSVESPKS). 2 stretches are compositionally biased toward low complexity: residues 513 to 527 (QSLL…STHP) and 589 to 605 (PLGG…SSKD). The segment covering 606-623 (PTSKPSDEPEPKESDLTK) has biased composition (basic and acidic residues). The CCHC HIVEP-type zinc finger occupies 633-663 (GANYECTICGARYKKRDNYEAHKKYYCSELQ). 5 disordered regions span residues 692 to 1098 (KLGA…PPYT), 1229 to 1274 (LPPV…TSAP), 1386 to 1427 (EGCS…KADE), 1441 to 1555 (STED…EGTD), and 1654 to 1694 (EVHL…GEPA). The segment covering 736-749 (STKSPAEASKSAPS) has biased composition (low complexity). The tract at residues 844 to 865 (EEPDRPDTEPEPPPKEPEKTEE) is acidic 2. Residues 845–865 (EPDRPDTEPEPPPKEPEKTEE) show a composition bias toward basic and acidic residues. The short motif at 885–891 (PKKKRLR) is the Nuclear localization signal element. The segment covering 893–929 (AEMAQSSGESSFESSVPLSRSPSQESSISLSGSSRSA) has biased composition (low complexity). Residues 930-939 (SFDREDHGKA) are compositionally biased toward basic and acidic residues. Composition is skewed to polar residues over residues 975–985 (SEQSPNVPHSS), 1062–1073 (TKSSVPQISVGT), and 1247–1256 (SSSTEYSSDI). A coiled-coil region spans residues 1409–1433 (METQQQKRVKEEEASKADEKLELVS). Basic and acidic residues-rich tracts occupy residues 1416 to 1427 (RVKEEEASKADE), 1442 to 1452 (TEDRKKTEKPH), and 1518 to 1527 (VKKEDPKEQT). Residues 1538–1547 (LPLSDTSPKP) show a composition bias toward low complexity. A compositionally biased stretch (basic and acidic residues) spans 1665-1694 (SQKDPARVEKEEKQGKAEEGTPTSKRGEPA). 2 C2H2-type zinc fingers span residues 1720–1742 (YVCE…IRTH) and 1748–1772 (YVCK…SKAH). The interval 1720-1772 (YVCEECGIRCKKPSMLKKHIRTHTDVRPYVCKHCHFAFKTKGNLTKHMKSKAH) is ZAS2. Residues 1783 to 1841 (EELEAEEGTSDDLHQDSEGQEGAEAVEEHQFSDLEDSDSDSDLDEDEEEEEEEEESQDE) are acidic 3. Disordered regions lie at residues 1786-1990 (EAEE…HLCG) and 2009-2038 (PAGL…ESPP). The span at 1815 to 1840 (DLEDSDSDSDLDEDEEEEEEEEESQD) shows a compositional bias: acidic residues. Positions 1871–1902 (PDSTSDEVPQGSSISEATHLTASSCSTPSRGT) are enriched in polar residues. Tandem repeats lie at residues 1897-1900 (TPSR), 1927-1930 (SPRR), 1933-1936 (SPSK), 1961-1964 (SPAR), and 2024-2027 (SPTR). Polar residues predominate over residues 1952–1961 (KNDSSPQQCS). The segment at 2053-2148 (SPSADKSGLG…QLLSRAPCPL (96 aa)) is 5 X 4 AA tandem repeats of [ST]-P-X-[RK]. Disordered stretches follow at residues 2184 to 2265 (SDLT…QGHQ) and 2284 to 2348 (KASS…PPSI). Residues 2203–2216 (SPSASVSPVAKVSK) show a composition bias toward low complexity. Over residues 2293 to 2314 (RSSSMDCLAETSTYSPPRSRNL) the composition is skewed to polar residues.

Interacts with TRAF1 and TRAF2 as well as with JUN. Forms a multimeric complex with RUNX2 and E3 ubiquitin ligase WWP1. Phosphorylated on threonine and serine residues. Phosphorylation by cyclin-dependent kinase CDK1 decreases HIVEP3 DNA binding affinity, and by epidermal growth factor receptor kinase increases its DNA binding affinity. As to expression, expressed in macrophages, lymphocytes, brain, thymus, spleen and bone marrow. Expressed in osteoblasts, whole bone and, to a lesser extent, in osteoclasts.

The protein resides in the cytoplasm. Its subcellular location is the nucleus. Its function is as follows. Plays a role of transcription factor; binds to recognition signal sequences (Rss heptamer) for somatic recombination of immunoglobulin and T-cell receptor gene segments; Also binds to the kappa-B motif of gene such as S100A4, involved in cell progression and differentiation. Kappa-B motif is a gene regulatory element found in promoters and enhancers of genes involved in immunity, inflammation, and growth and that responds to viral antigens, mitogens, and cytokines. Involvement of HIVEP3 in cell growth is strengthened by the fact that its down-regulation promotes cell cycle progression with ultimate formation of multinucleated giant cells. Strongly inhibits TNF-alpha-induced NF-kappa-B activation; Interferes with nuclear factor NF-kappa-B by several mechanisms: as transcription factor, by competing for Kappa-B motif and by repressing transcription in the nucleus; through a non transcriptional process, by inhibiting nuclear translocation of RELA by association with TRAF2, an adapter molecule in the tumor necrosis factor signaling, which blocks the formation of IKK complex. Interaction with TRAF proteins inhibits both NF-Kappa-B-mediated and c-Jun N-terminal kinase/JNK-mediated responses that include apoptosis and pro-inflammatory cytokine gene expression. Positively regulates the expression of IL2 in T-cell. Essential regulator of adult bone formation. This is Transcription factor HIVEP3 (Hivep3) from Mus musculus (Mouse).